We begin with the raw amino-acid sequence, 269 residues long: uncharacterized protein (269 aa).

This is an uncharacterized protein from Acanthamoeba polyphaga (Amoeba).